The following is a 627-amino-acid chain: Glyco-Gag protein (627 aa).

Topologically, residues 1–63 are cytoplasmic; it reads LGDVPRTSGA…FLLSVWNRSR (63 aa). A helical membrane pass occupies residues 64 to 86; sequence AARLVCCSIVLCCLCLTVFLYLS. Topologically, residues 87–627 are extracellular; sequence ENMGQTVTTP…PQASLLTLDD (541 aa). The N-linked (GlcNAc...) asparagine; by host glycan is linked to N113. A compositionally biased stretch (pro residues) spans 199-215; sequence PPSAPSLPPEPPFPTPP. Disordered stretches follow at residues 199-310 and 523-627; these read PPSA…RQGG and RETP…TLDD. 2 stretches are compositionally biased toward basic and acidic residues: residues 523–555 and 575–608; these read RETPEEREERIRRETEEKEERRRAEDEQREKER and RQDRQGGERRRPQLDHDQCAYCKEKGHWARDCPK. Residues 593–608 form a CCHC-type zinc finger; that stretch reads CAYCKEKGHWARDCPK.

In terms of processing, glycosylated by host. Post-translationally, cleaved by host near the middle of the molecule, releasing the c-terminal half containing capsid and nucleoprotein domains op GAG.

Its subcellular location is the host cell membrane. Plays a role in viral particle release. Presumably acts by facilitating the fission of the virion bud at the cell surface. May prevent the antiviral activity of murine APOBEC3. The chain is Glyco-Gag protein from Friend murine leukemia virus (isolate 57) (FrMLV).